A 1392-amino-acid polypeptide reads, in one-letter code: DNA-directed RNA polymerase subunit beta' (1392 aa).

Cysteine 70, cysteine 72, cysteine 85, and cysteine 88 together coordinate Zn(2+). 3 residues coordinate Mg(2+): aspartate 460, aspartate 462, and aspartate 464. Positions 810, 884, 891, and 894 each coordinate Zn(2+).

This sequence belongs to the RNA polymerase beta' chain family. In terms of assembly, the RNAP catalytic core consists of 2 alpha, 1 beta, 1 beta' and 1 omega subunit. When a sigma factor is associated with the core the holoenzyme is formed, which can initiate transcription. It depends on Mg(2+) as a cofactor. The cofactor is Zn(2+).

It carries out the reaction RNA(n) + a ribonucleoside 5'-triphosphate = RNA(n+1) + diphosphate. In terms of biological role, DNA-dependent RNA polymerase catalyzes the transcription of DNA into RNA using the four ribonucleoside triphosphates as substrates. The sequence is that of DNA-directed RNA polymerase subunit beta' from Geobacter metallireducens (strain ATCC 53774 / DSM 7210 / GS-15).